The primary structure comprises 451 residues: Phosphoglucosamine mutase (451 aa).

Ser-102 serves as the catalytic Phosphoserine intermediate. Mg(2+) is bound by residues Ser-102, Asp-243, Asp-245, and Asp-247. The residue at position 102 (Ser-102) is a Phosphoserine.

Belongs to the phosphohexose mutase family. It depends on Mg(2+) as a cofactor. Activated by phosphorylation.

It carries out the reaction alpha-D-glucosamine 1-phosphate = D-glucosamine 6-phosphate. Functionally, catalyzes the conversion of glucosamine-6-phosphate to glucosamine-1-phosphate. This Paramagnetospirillum magneticum (strain ATCC 700264 / AMB-1) (Magnetospirillum magneticum) protein is Phosphoglucosamine mutase.